The primary structure comprises 117 residues: Early E3 13.3 kDa protein (117 aa).

The sequence is that of Early E3 13.3 kDa protein from Canine adenovirus serotype 1 (strain Glaxo) (CAdV-1).